Reading from the N-terminus, the 235-residue chain is tRNA (guanine-N(1)-)-methyltransferase (235 aa).

S-adenosyl-L-methionine contacts are provided by residues glycine 112 and 132–137; that span reads IGDYVI.

Belongs to the RNA methyltransferase TrmD family. In terms of assembly, homodimer.

It localises to the cytoplasm. The enzyme catalyses guanosine(37) in tRNA + S-adenosyl-L-methionine = N(1)-methylguanosine(37) in tRNA + S-adenosyl-L-homocysteine + H(+). In terms of biological role, specifically methylates guanosine-37 in various tRNAs. The chain is tRNA (guanine-N(1)-)-methyltransferase from Anaplasma marginale (strain St. Maries).